The chain runs to 644 residues: Exoribonuclease 2 (644 aa).

The RNB domain maps to 189–516; it reads REDLTALDFV…NHRLLKAVIK (328 aa). The region spanning 561–643 is the S1 motif domain; it reads DTRFAAEIVD…ETRSIIARPV (83 aa).

The protein belongs to the RNR ribonuclease family. RNase II subfamily.

It is found in the cytoplasm. It carries out the reaction Exonucleolytic cleavage in the 3'- to 5'-direction to yield nucleoside 5'-phosphates.. In terms of biological role, involved in mRNA degradation. Hydrolyzes single-stranded polyribonucleotides processively in the 3' to 5' direction. This is Exoribonuclease 2 from Escherichia coli (strain SMS-3-5 / SECEC).